A 497-amino-acid polypeptide reads, in one-letter code: Intermediate filament protein A (497 aa).

Residues 1–32 (MSDLNDRLASYIEKVRFLEAQNRKLAADLDLL) are coil 1A. Residues 1-342 (MSDLNDRLAS…KMLEGEENRA (342 aa)) form the IF rod domain. Residues 33 to 46 (RGRWGKDTLSVRAM) are linker 1. The coil 1B stretch occupies residues 47–184 (YEGELQEARK…RVHDQEIAEL (138 aa)). The tract at residues 185 to 202 (QAMASRDTTPENREYFKN) is linker 12. Positions 203 to 342 (ELASAIRDIR…KMLEGEENRA (140 aa)) are coil 2. The segment at 343–497 (GLRQLVEQVV…THIQRSSHTI (155 aa)) is tail. Positions 375-493 (SRTSFQRSAK…EERATHIQRS (119 aa)) constitute an LTD domain.

It belongs to the intermediate filament family. As to quaternary structure, a and B can form homopolymers. In terms of tissue distribution, giant body muscle cells.

The protein localises to the cytoplasm. This is Intermediate filament protein A from Ascaris suum (Pig roundworm).